The chain runs to 689 residues: Methionine--tRNA ligase (689 aa).

Residues 15 to 25 (PYANGPIHLGH) carry the 'HIGH' region motif. Zn(2+) is bound by residues C146, C149, C159, and C162. The short motif at 332 to 336 (KMSKS) is the 'KMSKS' region element. K335 contributes to the ATP binding site. One can recognise a tRNA-binding domain in the interval 588-689 (DFAKIDLRIA…EGAQPGMRVK (102 aa)).

This sequence belongs to the class-I aminoacyl-tRNA synthetase family. MetG type 1 subfamily. Homodimer. Zn(2+) serves as cofactor.

The protein localises to the cytoplasm. It carries out the reaction tRNA(Met) + L-methionine + ATP = L-methionyl-tRNA(Met) + AMP + diphosphate. Is required not only for elongation of protein synthesis but also for the initiation of all mRNA translation through initiator tRNA(fMet) aminoacylation. The sequence is that of Methionine--tRNA ligase from Shewanella sp. (strain W3-18-1).